The sequence spans 534 residues: Glycerol kinase 5 (534 aa).

S33 and T34 together coordinate ATP. R103, D280, and Q281 together coordinate glycerol. Positions 302, 345, and 445 each coordinate ATP.

This sequence belongs to the FGGY kinase family. In terms of tissue distribution, expressed predominantly in sebaceous glands.

Its subcellular location is the cytoplasm. It carries out the reaction glycerol + ATP = sn-glycerol 3-phosphate + ADP + H(+). Its pathway is polyol metabolism; glycerol degradation via glycerol kinase pathway; sn-glycerol 3-phosphate from glycerol: step 1/1. Skin-specific kinase that plays a key role in glycerol metabolism, catalyzing its phosphorylation to produce sn-glycerol 3-phosphate. Involved in skin-specific regulation of sterol regulatory element-binding protein (SREBP) processing and lipid biosynthesis. The protein is Glycerol kinase 5 (Gk5) of Mus musculus (Mouse).